The sequence spans 120 residues: UPF0145 protein UNCMA_30400 (120 aa).

It belongs to the UPF0145 family.

This chain is UPF0145 protein UNCMA_30400, found in Methanocella arvoryzae (strain DSM 22066 / NBRC 105507 / MRE50).